Consider the following 319-residue polypeptide: Lambda-crystallin homolog (319 aa).

Alanine 2 carries the post-translational modification N-acetylalanine. A Phosphoserine modification is found at serine 3. NAD(+)-binding positions include 16-17 (VI), aspartate 36, glutamate 97, and lysine 102. A Phosphoserine modification is found at serine 111.

Belongs to the 3-hydroxyacyl-CoA dehydrogenase family. As to quaternary structure, homodimer. In terms of tissue distribution, widely expressed, with highest levels in liver and kidney.

It localises to the cytoplasm. It carries out the reaction L-gulonate + NAD(+) = 3-dehydro-L-gulonate + NADH + H(+). With respect to regulation, inhibited by malonate. Has high L-gulonate 3-dehydrogenase activity. It also exhibits low dehydrogenase activity toward L-3-hydroxybutyrate (HBA) and L-threonate. The protein is Lambda-crystallin homolog (CRYL1) of Homo sapiens (Human).